A 286-amino-acid polypeptide reads, in one-letter code: Light-independent protochlorophyllide reductase iron-sulfur ATP-binding protein (286 aa).

Residues glycine 10 to threonine 15 and lysine 39 contribute to the ATP site. Serine 14 is a binding site for Mg(2+). The [4Fe-4S] cluster site is built by cysteine 95 and cysteine 129. ATP is bound at residue asparagine 180–arginine 181.

It belongs to the NifH/BchL/ChlL family. Homodimer. Protochlorophyllide reductase is composed of three subunits; ChlL, ChlN and ChlB. [4Fe-4S] cluster serves as cofactor.

It catalyses the reaction chlorophyllide a + oxidized 2[4Fe-4S]-[ferredoxin] + 2 ADP + 2 phosphate = protochlorophyllide a + reduced 2[4Fe-4S]-[ferredoxin] + 2 ATP + 2 H2O. Its pathway is porphyrin-containing compound metabolism; chlorophyll biosynthesis (light-independent). Its function is as follows. Component of the dark-operative protochlorophyllide reductase (DPOR) that uses Mg-ATP and reduced ferredoxin to reduce ring D of protochlorophyllide (Pchlide) to form chlorophyllide a (Chlide). This reaction is light-independent. The L component serves as a unique electron donor to the NB-component of the complex, and binds Mg-ATP. The protein is Light-independent protochlorophyllide reductase iron-sulfur ATP-binding protein of Cyanothece sp. (strain PCC 7425 / ATCC 29141).